Consider the following 363-residue polypeptide: Mitochondrial phosphate carrier protein 2, mitochondrial (363 aa).

A helical transmembrane segment spans residues 65–85 (AYFAACTVAGMLSCGITHTAI). Solcar repeat units follow at residues 65–149 (AYFA…AKKY), 162–246 (YKTL…TVEL), and 263–342 (VQLG…VKVL). Over 86-123 (TPLDVIKCNMQIDPLKYKNITSAFKTTIKEQGLKGFTR) the chain is Mitochondrial matrix. The helical transmembrane segment at 124–143 (GWSPTLLGYSAQGAFKYGLY) threads the bilayer. At 144-164 (EYAKKYYSDIVGPEYAAKYKT) the chain is on the mitochondrial intermembrane side. The helical transmembrane segment at 165–185 (LIYLAGSASAEIVADVALCPM) threads the bilayer. Residues 186–220 (EAVKVRVQTQPGFARGLSDGLPKIIKSEGFRGLHK) lie on the Mitochondrial matrix side of the membrane. A helical membrane pass occupies residues 221–240 (GLVPLWGRQIPYTMMKFATF). Residues 241-261 (ENTVELIYKKVMPTPKEECSK) are Mitochondrial intermembrane-facing. A helical transmembrane segment spans residues 262–282 (PVQLGVSFAGGYIAGIFCAII). Over 283 to 321 (SHPADNLVSFLNNSKGATVADAVKRLGLWGMLTRGLPLR) the chain is Mitochondrial matrix. The chain crosses the membrane as a helical span at residues 322-342 (IFMIGTLTGAQWVIYDAVKVL). The Mitochondrial intermembrane portion of the chain corresponds to 343–363 (AGLPTTGGASPATALAPSVSA).

Belongs to the mitochondrial carrier (TC 2.A.29) family. As to expression, expressed in leaves. Strong expression in senescent leaves.

The protein localises to the mitochondrion inner membrane. Functionally, transport of phosphate groups from the cytosol to the mitochondrial matrix. Mediates salt stress tolerance through an ATP-dependent pathway and via modulation of the gibberellin metabolism. In Arabidopsis thaliana (Mouse-ear cress), this protein is Mitochondrial phosphate carrier protein 2, mitochondrial (MPT2).